Reading from the N-terminus, the 363-residue chain is NAD(P)H-quinone oxidoreductase subunit 1, chloroplastic (363 aa).

The next 6 membrane-spanning stretches (helical) occupy residues 26 to 46 (IIWV…GVLV), 98 to 118 (FSIG…VIPF), 127 to 147 (LSIG…GLLM), 253 to 273 (FGLF…FVTV), 300 to 320 (VFGT…FLFI), and 336 to 356 (LLNL…LLTT).

This sequence belongs to the complex I subunit 1 family. NDH is composed of at least 16 different subunits, 5 of which are encoded in the nucleus.

It localises to the plastid. Its subcellular location is the chloroplast thylakoid membrane. The enzyme catalyses a plastoquinone + NADH + (n+1) H(+)(in) = a plastoquinol + NAD(+) + n H(+)(out). It catalyses the reaction a plastoquinone + NADPH + (n+1) H(+)(in) = a plastoquinol + NADP(+) + n H(+)(out). Its function is as follows. NDH shuttles electrons from NAD(P)H:plastoquinone, via FMN and iron-sulfur (Fe-S) centers, to quinones in the photosynthetic chain and possibly in a chloroplast respiratory chain. The immediate electron acceptor for the enzyme in this species is believed to be plastoquinone. Couples the redox reaction to proton translocation, and thus conserves the redox energy in a proton gradient. The chain is NAD(P)H-quinone oxidoreductase subunit 1, chloroplastic from Helianthus annuus (Common sunflower).